The primary structure comprises 580 residues: Peptide transporter PTR_B (580 aa).

Positions Met-1–Asp-30 are enriched in basic and acidic residues. Residues Met-1–His-45 form a disordered region. The chain crosses the membrane as a helical span at residues Ile-57–Leu-78. A glycan (N-linked (GlcNAc...) asparagine) is linked at Asn-101. The next 11 helical transmembrane spans lie at Ala-107–Ala-127, Tyr-134–Thr-154, Thr-163–Ile-183, Val-219–Ala-239, Phe-249–Leu-269, Ala-326–Met-346, Ile-370–Ile-390, Ile-402–Phe-422, Ile-449–Thr-469, Ser-484–Leu-504, and Met-513–Phe-533.

This sequence belongs to the major facilitator superfamily. Proton-dependent oligopeptide transporter (POT/PTR) (TC 2.A.17) family.

Its subcellular location is the cell membrane. The enzyme catalyses a dipeptide(out) + H(+)(out) = a dipeptide(in) + H(+)(in). It carries out the reaction an L-amino acid tripeptide(out) + H(+)(out) = an L-amino acid tripeptide(in) + H(+)(in). In terms of biological role, peptide transporter that exploits the inwardly directed proton motive force to facilitate the cellular uptake of di/tripeptides. Shows strong uptake specificity towards the dipeptides Tyr-Phe and Gly-His, when compared to PTR_A and PTR_C. The sequence is that of Peptide transporter PTR_B from Candidozyma auris (Yeast).